Reading from the N-terminus, the 226-residue chain is Ribonuclease 3 (226 aa).

Positions 5–127 (LERLQRALGY…IIGAIYLDAG (123 aa)) constitute an RNase III domain. Glu-40 contacts Mg(2+). The active site involves Asp-44. Mg(2+)-binding residues include Asp-113 and Glu-116. Glu-116 is a catalytic residue. The 71-residue stretch at 154 to 224 (DSKTRLQEYL…AKQALLALGV (71 aa)) folds into the DRBM domain.

Belongs to the ribonuclease III family. As to quaternary structure, homodimer. The cofactor is Mg(2+).

It localises to the cytoplasm. It catalyses the reaction Endonucleolytic cleavage to 5'-phosphomonoester.. Digests double-stranded RNA. Involved in the processing of primary rRNA transcript to yield the immediate precursors to the large and small rRNAs (23S and 16S). Processes some mRNAs, and tRNAs when they are encoded in the rRNA operon. Processes pre-crRNA and tracrRNA of type II CRISPR loci if present in the organism. In Hahella chejuensis (strain KCTC 2396), this protein is Ribonuclease 3.